The primary structure comprises 344 residues: DNA polymerase III subunit delta (344 aa).

Belongs to the DNA polymerase HolA subunit family. As to quaternary structure, DNA polymerase III contains a core (composed of alpha, epsilon and theta chains) that associates with a tau subunit. This core dimerizes to form the POLIII' complex. PolIII' associates with the gamma complex (composed of gamma, delta, delta', psi and chi chains) and with the beta chain to form the complete DNA polymerase III complex.

The enzyme catalyses DNA(n) + a 2'-deoxyribonucleoside 5'-triphosphate = DNA(n+1) + diphosphate. In terms of biological role, DNA polymerase III is a complex, multichain enzyme responsible for most of the replicative synthesis in bacteria. This DNA polymerase also exhibits 3' to 5' exonuclease activity. The delta subunit seems to interact with the gamma subunit to transfer the beta subunit on the DNA. The polypeptide is DNA polymerase III subunit delta (holA) (Haemophilus influenzae (strain ATCC 51907 / DSM 11121 / KW20 / Rd)).